A 314-amino-acid polypeptide reads, in one-letter code: Leucotoxin LukE (314 aa).

The N-terminal stretch at 1–28 is a signal peptide; the sequence is MFKKKMLAASLSVGLIAPLASPIQESRA.

This sequence belongs to the aerolysin family. Toxicity requires sequential binding and synergistic association of a class S and a class F component which form heterooligomeric complexes. LukE (class S) associates with LukD (class F). LukE can also associate with HlgB.

It is found in the secreted. Its function is as follows. Part of a bi-component leucotoxin that acts by forming pores in the membrane of the target cells. LukE-LukD is as effective as the Panton-Valentine leucocidin (PVL) for inducing dermonecrosis when injected in the rabbit skin, but not hemolytic and poorly leucotoxic on human blood cells compared to other leucotoxins expressed by S.aureus. In Staphylococcus aureus, this protein is Leucotoxin LukE (lukE).